A 333-amino-acid polypeptide reads, in one-letter code: Methylosome protein WDR77 (333 aa).

WD repeat units lie at residues 16-59 (CMEV…GAPN), 68-106 (QTEA…SLLV), 113-152 (EHDD…VLKS), 155-195 (AHSS…PATR), 199-240 (CASD…SAQT), 243-283 (VHSQ…VFRD), and 285-328 (SHRD…NLIA).

Heterotetramer; dimer of heterodimer with prmt5. Interacts with histone h2a and h4 and with nucleoplasmin. Detected in egg (at protein level).

Its subcellular location is the cytoplasm. It is found in the nucleus. Functionally, non-catalytic component of the 20S prmt5-containing methyltransferase complex, which modifies specific arginines to dimethylarginines in several spliceosomal Sm proteins and histones. Required for normal prmt5 methyltransferase activity. The sequence is that of Methylosome protein WDR77 from Xenopus laevis (African clawed frog).